Consider the following 2032-residue polypeptide: Transient receptor potential channel (2032 aa).

Positions 129 to 139 (KKTRKHRRRRS) are enriched in basic residues. 5 disordered regions span residues 129–162 (KKTRKHRRRRSGSFTGGVYPRKGHRNRSLLGHAI), 197–223 (QSKGGDQVPPTSTTTGGAGGDGNAVPT), 831–860 (KKAMGVFSSRPSRTGSGIASRQSTEGMGGV), 912–945 (ANPMRPPNLGDSRDCGSEFDEELSLTSASDGSQT), and 1120–1211 (AAEH…EAGN). 3 stretches are compositionally biased toward polar residues: residues 839–855 (SRPSRTGSGIASRQSTE), 935–945 (SLTSASDGSQT), and 1120–1129 (AAEHQNDMNY). A compositionally biased stretch (low complexity) spans 1130–1149 (SSSSSSSSSSSSSSSSSDSS). Polar residues predominate over residues 1171–1185 (TSQGSAQSLNITSLF). The next 5 helical transmembrane spans lie at 1310–1330 (FWSWTISFILFITFFTYTLLV), 1332–1352 (TPPRPTVIEYILIAYVAAFGL), 1374–1394 (VCSFWNCVTILAIIFYIVGFF), 1439–1459 (MIQNMSYIIVMLVVTLLSFGL), and 1535–1555 (LMTFFLLIANILLMSMLIAIF). Disordered stretches follow at residues 1753-1779 (GTDPILEEKDHDSGENSNSLPPGRIRR), 1853-1909 (HPER…SRDQ), 1935-1982 (EEED…EEVD), and 1999-2032 (LNEEEQAGAPHSTPVIASPSSSRADLTSQKCSDV). Positions 1935–1947 (EEEDEEEDDEEDD) are enriched in acidic residues. The span at 1951 to 1962 (RHHIHPRRKSSR) shows a compositional bias: basic residues. Residues 2016 to 2032 (SPSSSRADLTSQKCSDV) are compositionally biased toward polar residues.

The protein belongs to the transient receptor (TC 1.A.4) family. LTrpC subfamily. As to expression, gonads.

The protein localises to the membrane. Its function is as follows. Required for initiation and continuation of postembryonic mitotic cell divisions of gonadal cells Z1 and Z4. Zygotic expression is necessary for hermaphrodite fertility. May be a cation channel. In Caenorhabditis elegans, this protein is Transient receptor potential channel (gon-2).